Consider the following 349-residue polypeptide: Homeobox protein engrailed (349 aa).

Disordered regions lie at residues 26-53 (DGPS…SPLS), 146-210 (GKET…PLPP), 228-252 (PSSG…EKRP), and 327-349 (STIP…ARIE). Basic and acidic residues-rich tracts occupy residues 173 to 188 (QMKK…RTES) and 242 to 252 (DKAITPDEKRP). The segment at residues 249–308 (EKRPRTAFTAEQLSRLKHEFNENRYLTERRRQDLARELGLHENQIKIWFQNNRAKLKKSS) is a DNA-binding region (homeobox).

Belongs to the engrailed homeobox family.

The protein resides in the nucleus. The sequence is that of Homeobox protein engrailed from Artemia franciscana (Brine shrimp).